The following is a 163-amino-acid chain: MSDPSFDVVSEISRPELTNAVTQALGEIKNRFDFKGSKSDIQLEDEQLVLVSDNEAKLESVIDVLVSKMAKRGLGLKNFDFKSKVEPATGGTVRMKVKIRKGMEKEQTKEVTRIIKESKLKVNVTIMGESVRVTGKKKDDLQEVIHLLKNADFPFDVQFTNYK.

Belongs to the YajQ family.

Nucleotide-binding protein. This chain is Nucleotide-binding protein LBJ_2391, found in Leptospira borgpetersenii serovar Hardjo-bovis (strain JB197).